A 252-amino-acid polypeptide reads, in one-letter code: Hydroxyacylglutathione hydrolase (252 aa).

Positions 54, 56, 58, 59, 111, 128, and 166 each coordinate Zn(2+).

This sequence belongs to the metallo-beta-lactamase superfamily. Glyoxalase II family. As to quaternary structure, monomer. Zn(2+) serves as cofactor.

It catalyses the reaction an S-(2-hydroxyacyl)glutathione + H2O = a 2-hydroxy carboxylate + glutathione + H(+). The protein operates within secondary metabolite metabolism; methylglyoxal degradation; (R)-lactate from methylglyoxal: step 2/2. Thiolesterase that catalyzes the hydrolysis of S-D-lactoyl-glutathione to form glutathione and D-lactic acid. This chain is Hydroxyacylglutathione hydrolase, found in Vibrio parahaemolyticus serotype O3:K6 (strain RIMD 2210633).